Here is a 598-residue protein sequence, read N- to C-terminus: Jacalin-related lectin 17 (598 aa).

Residues 1 to 23 form a disordered region; it reads MAQRLEAEGNKNFKGKSKWDDGS. Jacalin-type lectin domains are found at residues 2 to 148, 151 to 293, 295 to 445, and 452 to 595; these read AQRL…YVTW, PTKL…YFTT, PFTK…HFCP, and GEKV…HVLP.

This sequence belongs to the jacalin lectin family.

The protein is Jacalin-related lectin 17 (JAL17) of Arabidopsis thaliana (Mouse-ear cress).